We begin with the raw amino-acid sequence, 158 residues long: MEPPEGAGTGEIVKEAEVPQAALGVPAQGTGDNGHTPVEEEVGGIPVPAPGLLQVTERRQPLSSVSSLEVHFDLLDLTELTDMSDQELAEVFADSDDENLNTESPAGLHPLPRAGYLRSPSWTRTRAEQSHEKQPLGDPERQATVLDTFLTVERPQED.

Disordered regions lie at residues 1–50 (MEPP…VPAP) and 93–158 (ADSD…PQED). Phosphoserine occurs at positions 95 and 119. Residues 125 to 141 (TRAEQSHEKQPLGDPER) show a composition bias toward basic and acidic residues.

This sequence belongs to the dysbindin family.

In Homo sapiens (Human), this protein is Dysbindin domain-containing protein 1 (DBNDD1).